Here is a 393-residue protein sequence, read N- to C-terminus: NAD(P)H-quinone oxidoreductase subunit H, chloroplastic (393 aa).

This sequence belongs to the complex I 49 kDa subunit family. NDH is composed of at least 16 different subunits, 5 of which are encoded in the nucleus.

The protein localises to the plastid. It is found in the chloroplast thylakoid membrane. The catalysed reaction is a plastoquinone + NADH + (n+1) H(+)(in) = a plastoquinol + NAD(+) + n H(+)(out). It catalyses the reaction a plastoquinone + NADPH + (n+1) H(+)(in) = a plastoquinol + NADP(+) + n H(+)(out). NDH shuttles electrons from NAD(P)H:plastoquinone, via FMN and iron-sulfur (Fe-S) centers, to quinones in the photosynthetic chain and possibly in a chloroplast respiratory chain. The immediate electron acceptor for the enzyme in this species is believed to be plastoquinone. Couples the redox reaction to proton translocation, and thus conserves the redox energy in a proton gradient. The protein is NAD(P)H-quinone oxidoreductase subunit H, chloroplastic of Lolium perenne (Perennial ryegrass).